A 407-amino-acid chain; its full sequence is Arginine biosynthesis bifunctional protein ArgJ (407 aa).

Thr157, Lys183, Thr194, Glu280, Asn402, and Thr407 together coordinate substrate. Thr194 acts as the Nucleophile in catalysis.

Belongs to the ArgJ family. As to quaternary structure, heterotetramer of two alpha and two beta chains.

It localises to the cytoplasm. It catalyses the reaction N(2)-acetyl-L-ornithine + L-glutamate = N-acetyl-L-glutamate + L-ornithine. It carries out the reaction L-glutamate + acetyl-CoA = N-acetyl-L-glutamate + CoA + H(+). It participates in amino-acid biosynthesis; L-arginine biosynthesis; L-ornithine and N-acetyl-L-glutamate from L-glutamate and N(2)-acetyl-L-ornithine (cyclic): step 1/1. Its pathway is amino-acid biosynthesis; L-arginine biosynthesis; N(2)-acetyl-L-ornithine from L-glutamate: step 1/4. Functionally, catalyzes two activities which are involved in the cyclic version of arginine biosynthesis: the synthesis of N-acetylglutamate from glutamate and acetyl-CoA as the acetyl donor, and of ornithine by transacetylation between N(2)-acetylornithine and glutamate. This chain is Arginine biosynthesis bifunctional protein ArgJ, found in Oceanobacillus iheyensis (strain DSM 14371 / CIP 107618 / JCM 11309 / KCTC 3954 / HTE831).